We begin with the raw amino-acid sequence, 430 residues long: Serine--tRNA ligase (430 aa).

L-serine is bound at residue 237-239 (TAE). Position 268–270 (268–270 (RSE)) interacts with ATP. E291 contributes to the L-serine binding site. 355 to 358 (EISS) provides a ligand contact to ATP. An L-serine-binding site is contributed by S391.

Belongs to the class-II aminoacyl-tRNA synthetase family. Type-1 seryl-tRNA synthetase subfamily. Homodimer. The tRNA molecule binds across the dimer.

It localises to the cytoplasm. It catalyses the reaction tRNA(Ser) + L-serine + ATP = L-seryl-tRNA(Ser) + AMP + diphosphate + H(+). The enzyme catalyses tRNA(Sec) + L-serine + ATP = L-seryl-tRNA(Sec) + AMP + diphosphate + H(+). The protein operates within aminoacyl-tRNA biosynthesis; selenocysteinyl-tRNA(Sec) biosynthesis; L-seryl-tRNA(Sec) from L-serine and tRNA(Sec): step 1/1. Its function is as follows. Catalyzes the attachment of serine to tRNA(Ser). Is also able to aminoacylate tRNA(Sec) with serine, to form the misacylated tRNA L-seryl-tRNA(Sec), which will be further converted into selenocysteinyl-tRNA(Sec). This is Serine--tRNA ligase from Escherichia coli O139:H28 (strain E24377A / ETEC).